A 429-amino-acid polypeptide reads, in one-letter code: MKKVLAIILGGGAGTRLYPLTKLRAKPAVPVAGKYRLIDIPVSNCINSEIFKIYVLTQFNSASLNRHIARTYNFSGFSEGFVEVLAAQQTPENPNWFQGTADAVRQYLWMLQEWDVDEFLILSGDHLYRMDYRLFIQRHRETNADITLSVIPIDDRRASDFGLMKIDNSGRVIDFSEKPKGEALTKMRVDTTVLGLTPEQAASQPYIASMGIYVFKKDVLIKLLKESLERTDFGKEIIPDASKDHNVQAYLFDDYWEDIGTIEAFYNANLALTQQPMPPFSFYDEEAPIYTRARYLPPTKLLDCHVTESIIGEGCILKNCRIQHSVLGVRSRIETGCVIEESLLMGADFYQASVERQCSIDKGDIPVGIGPDTIIRRAIIDKNARIGHDVKIINKDNVQEADRESQGFYIRSGIVVVLKNAVITDGTII.

Alpha-D-glucose 1-phosphate-binding positions include Gly162, Glu177 to Lys178, and Ser209.

Belongs to the bacterial/plant glucose-1-phosphate adenylyltransferase family. Homotetramer.

The catalysed reaction is alpha-D-glucose 1-phosphate + ATP + H(+) = ADP-alpha-D-glucose + diphosphate. It participates in glycan biosynthesis; glycogen biosynthesis. Functionally, involved in the biosynthesis of ADP-glucose, a building block required for the elongation reactions to produce glycogen. Catalyzes the reaction between ATP and alpha-D-glucose 1-phosphate (G1P) to produce pyrophosphate and ADP-Glc. This is Glucose-1-phosphate adenylyltransferase from Trichormus variabilis (strain ATCC 29413 / PCC 7937) (Anabaena variabilis).